Consider the following 697-residue polypeptide: MAREYKLEDYRNIGIMAHIDAGKTTTTERVLFHTGKIHKIGETHEGESQMDWMVQEQERGITITSAATTAYWGGKRLNIIDTPGHVDFTVEVERSLRVLDGAVAVLDAQSGVEPQTETVWRQATNYNVPRIVYVNKMDKAGANFKASTESLRKLLGANAHPIQLNIGEEAQFTGIIDLVEMKAYEFDGKPEENMKEIPIPAHLLDEATLMRSSLIESVADFDEEIMEALLEEKEVSIEKIKAAIRKATLSATYFPVVCGTSFKNKGVKLMLNAIVDYLPSPLDIPPMKAYKGEGEISIPASDDEFFSSLAFKVMNDPYVGNLTFFRVYSGILNKGTYLYNSTKGEKERIGRILLMHANSRTDIDEVRTGDIGAAVGLKFTTTGDTLIDEKHKDIVLENMNFPEPVISQALEPASKDASEKLSLALQRLAAEDPTFKYYTDEETGQTIIAGMGELHLDIIVDRLKREFKVAANVGAPQVSYRETITKSAEVEGIHKKQSGGKGQYGHVWIKYEPNPDKGFEFVDKIVGGKIPKEYIKSIEKGLKEKMEIGILAGYPLIDVKATLFDGSYHEVDSSELAYKIAASKSLTKGREMLGTVLLEPIMDVAVVIPEDFFGDVMGDISRRRGQVRDNETRNDGAHVIKAYIPLSEMFGYATELRSMTTGRGTYQMWFDHYEKLPRNLADEIIKKRGGKVKIDED.

Residues glutamate 8–leucine 282 form the tr-type G domain. Residues alanine 17–threonine 24, aspartate 81–histidine 85, and asparagine 135–aspartate 138 contribute to the GTP site.

Belongs to the TRAFAC class translation factor GTPase superfamily. Classic translation factor GTPase family. EF-G/EF-2 subfamily.

The protein localises to the cytoplasm. Catalyzes the GTP-dependent ribosomal translocation step during translation elongation. During this step, the ribosome changes from the pre-translocational (PRE) to the post-translocational (POST) state as the newly formed A-site-bound peptidyl-tRNA and P-site-bound deacylated tRNA move to the P and E sites, respectively. Catalyzes the coordinated movement of the two tRNA molecules, the mRNA and conformational changes in the ribosome. This Metamycoplasma arthritidis (strain 158L3-1) (Mycoplasma arthritidis) protein is Elongation factor G.